A 213-amino-acid polypeptide reads, in one-letter code: Probable septum site-determining protein MinC (213 aa).

It belongs to the MinC family. In terms of assembly, interacts with MinD and FtsZ.

Its function is as follows. Cell division inhibitor that blocks the formation of polar Z ring septums. Rapidly oscillates between the poles of the cell to destabilize FtsZ filaments that have formed before they mature into polar Z rings. Prevents FtsZ polymerization. This Pseudothermotoga lettingae (strain ATCC BAA-301 / DSM 14385 / NBRC 107922 / TMO) (Thermotoga lettingae) protein is Probable septum site-determining protein MinC.